A 466-amino-acid polypeptide reads, in one-letter code: Ribulose bisphosphate carboxylase large chain (466 aa).

Residue Lys-5 is modified to N6,N6,N6-trimethyllysine. Residues Asn-114 and Thr-164 each coordinate substrate. The Proton acceptor role is filled by Lys-166. Lys-168 provides a ligand contact to substrate. Mg(2+) is bound by residues Lys-192, Asp-194, and Glu-195. Lys-192 is subject to N6-carboxylysine. His-285 serves as the catalytic Proton acceptor. Substrate is bound by residues Arg-286, His-318, and Ser-370.

It belongs to the RuBisCO large chain family. Type I subfamily. In terms of assembly, heterohexadecamer of 8 large chains and 8 small chains; disulfide-linked. The disulfide link is formed within the large subunit homodimers. The cofactor is Mg(2+). In terms of processing, the disulfide bond which can form in the large chain dimeric partners within the hexadecamer appears to be associated with oxidative stress and protein turnover.

It localises to the plastid. The protein localises to the chloroplast. The catalysed reaction is 2 (2R)-3-phosphoglycerate + 2 H(+) = D-ribulose 1,5-bisphosphate + CO2 + H2O. It catalyses the reaction D-ribulose 1,5-bisphosphate + O2 = 2-phosphoglycolate + (2R)-3-phosphoglycerate + 2 H(+). In terms of biological role, ruBisCO catalyzes two reactions: the carboxylation of D-ribulose 1,5-bisphosphate, the primary event in carbon dioxide fixation, as well as the oxidative fragmentation of the pentose substrate in the photorespiration process. Both reactions occur simultaneously and in competition at the same active site. This chain is Ribulose bisphosphate carboxylase large chain, found in Hedera helix (English ivy).